The primary structure comprises 208 residues: V-type ATP synthase subunit E (208 aa).

Belongs to the V-ATPase E subunit family.

Functionally, produces ATP from ADP in the presence of a proton gradient across the membrane. This chain is V-type ATP synthase subunit E, found in Chlamydia trachomatis serovar A (strain ATCC VR-571B / DSM 19440 / HAR-13).